The primary structure comprises 458 residues: Phosphoglucosamine mutase (458 aa).

Catalysis depends on Ser100, which acts as the Phosphoserine intermediate. Residues Ser100, Asp239, Asp241, and Asp243 each contribute to the Mg(2+) site. Ser100 is subject to Phosphoserine.

The protein belongs to the phosphohexose mutase family. The cofactor is Mg(2+). In terms of processing, activated by phosphorylation.

It carries out the reaction alpha-D-glucosamine 1-phosphate = D-glucosamine 6-phosphate. Its function is as follows. Catalyzes the conversion of glucosamine-6-phosphate to glucosamine-1-phosphate. The chain is Phosphoglucosamine mutase from Dictyoglomus thermophilum (strain ATCC 35947 / DSM 3960 / H-6-12).